Consider the following 427-residue polypeptide: Inward rectifier potassium channel 2 (427 aa).

Residues 1 to 81 (MGSVRTNRYS…IFTTCVDIRW (81 aa)) lie on the Cytoplasmic side of the membrane. An S-nitrosocysteine modification is found at Cys-76. The helical transmembrane segment at 82 to 106 (RWMLVIFCLAFVLSWLFFGCVFWLI) threads the bilayer. Over 107-128 (ALLHGDLDASKESKACVSEVNS) the chain is Extracellular. The segment at residues 129 to 140 (FTAAFLFSIETQ) is an intramembrane region (helical; Pore-forming). An intramembrane region (pore-forming) is located at residues 141–147 (TTIGYGF). Positions 142-147 (TIGYGF) match the Selectivity filter motif. The Extracellular segment spans residues 148 to 156 (RCVTDECPI). A helical transmembrane segment spans residues 157–178 (AVFMVVFQSIVGCIIDAFIIGA). Residues 179–427 (VMAKMAKPKK…PRPLRRESEI (249 aa)) are Cytoplasmic-facing. Positions 181–208 (AKMAKPKKRNETLVFSHNAVIAMRDGKL) are polyphosphoinositide (PIP2)-binding. The interval 384–427 (SKEEDDSENGVPESTSTDTPPDIDLHNQASVPLEPRPLRRESEI) is disordered. The PDZ-binding motif lies at 425-427 (SEI).

The protein belongs to the inward rectifier-type potassium channel (TC 1.A.2.1) family. KCNJ2 subfamily. As to quaternary structure, homotetramer. Homomultimeric and heteromultimeric association with KCNJ4/Kir2.3. Can form heteromeric channels with Kir2.6/KCNJ18. Associates, via its PDZ-recognition domain, with a complex containing LIN7A, LIN7B, LIN7C, DLG1, CASK and APBA1. S-nitrosylation increases the open probability and inward rectifying currents.

The protein resides in the cell membrane. The protein localises to the sarcolemma. It localises to the T-tubule. The enzyme catalyses K(+)(in) = K(+)(out). Its activity is regulated as follows. Activated by phosphatidylinositol 4,5 biphosphate (PtdIns(4,5)P2). Its function is as follows. Inward rectifier potassium channels are characterized by a greater tendency to allow potassium to flow into the cell rather than out of it. Their voltage dependence is regulated by the concentration of extracellular potassium; as external potassium is raised, the voltage range of the channel opening shifts to more positive voltages. The inward rectification is mainly due to the blockage of outward current by internal magnesium. Blocked by external barium or cesium. Probably participates in establishing action potential waveform and excitability of neuronal and muscle tissues. The protein is Inward rectifier potassium channel 2 (KCNJ2) of Cavia porcellus (Guinea pig).